Here is a 432-residue protein sequence, read N- to C-terminus: Adenylosuccinate synthetase (432 aa).

Residues 12–18 (GDEGKGK) and 40–42 (GHT) contribute to the GTP site. Asp-13 (proton acceptor) is an active-site residue. The Mg(2+) site is built by Asp-13 and Gly-40. Residues 13 to 16 (DEGK), 38 to 41 (NAGH), Thr-129, Arg-143, Gln-224, Thr-239, and Arg-303 each bind IMP. His-41 serves as the catalytic Proton donor. 299–305 (VTTGRRR) lines the substrate pocket. Residues Arg-305, 331 to 333 (KLD), and 413 to 415 (GVG) each bind GTP.

Belongs to the adenylosuccinate synthetase family. As to quaternary structure, homodimer. Mg(2+) is required as a cofactor.

It is found in the cytoplasm. It carries out the reaction IMP + L-aspartate + GTP = N(6)-(1,2-dicarboxyethyl)-AMP + GDP + phosphate + 2 H(+). It participates in purine metabolism; AMP biosynthesis via de novo pathway; AMP from IMP: step 1/2. In terms of biological role, plays an important role in the de novo pathway of purine nucleotide biosynthesis. Catalyzes the first committed step in the biosynthesis of AMP from IMP. In Mycobacterium tuberculosis (strain CDC 1551 / Oshkosh), this protein is Adenylosuccinate synthetase.